Here is a 57-residue protein sequence, read N- to C-terminus: uncharacterized protein (57 aa).

A helical membrane pass occupies residues 34 to 54 (AALLDAAALVVIPGLLTAAAV).

It localises to the membrane. This is an uncharacterized protein from Dictyostelium discoideum (Social amoeba).